Consider the following 289-residue polypeptide: Golgi to ER traffic protein 2 (289 aa).

Residues 1-10 (MSEVSEAEKR) are compositionally biased toward basic and acidic residues. The segment at 1 to 68 (MSEVSEAEKR…LQRGSNSGQS (68 aa)) is disordered. The Cytoplasmic portion of the chain corresponds to 1–153 (MSEVSEAEKR…VGVHQFQVRQ (153 aa)). Over residues 11 to 21 (RILREKRKQKF) the composition is skewed to basic residues. Residues 33–68 (ITTQQPGGASGDSTVTSAEISDNEGSLQRGSNSGQS) are compositionally biased toward polar residues. The chain crosses the membrane as a helical span at residues 154–173 (LKAYMLLLRWAILLPFIYYV). At 174–196 (MHPGTAHWLHTSRFLHFVMEPRN) the chain is on the lumenal side. Residues 197–216 (FFMVFTTFEVASISIYYQVL) traverse the membrane as a helical segment. Topologically, residues 217–263 (LTLERTNKVNSLSYSSKLVTWAGLVPDGMLPIDNLQGKVVVALHYWD) are cytoplasmic. The chain crosses the membrane as a helical span at residues 264 to 284 (ILSMYLTDLSLCLVAAGLMKY). Over 285–289 (YHAAP) the chain is Lumenal.

The protein belongs to the GET2 family. As to quaternary structure, component of the Golgi to ER traffic (GET) complex, which is composed of GET1, GET2 and GET3. Within the complex, GET1 and GET2 form a heterotetramer which is stabilized by phosphatidylinositol binding and which binds to the GET3 homodimer.

It localises to the endoplasmic reticulum membrane. The protein localises to the golgi apparatus membrane. Its function is as follows. Required for the post-translational delivery of tail-anchored (TA) proteins to the endoplasmic reticulum. Together with GET1, acts as a membrane receptor for soluble GET3, which recognizes and selectively binds the transmembrane domain of TA proteins in the cytosol. The GET complex cooperates with the HDEL receptor ERD2 to mediate the ATP-dependent retrieval of resident ER proteins that contain a C-terminal H-D-E-L retention signal from the Golgi to the ER. In Eremothecium gossypii (strain ATCC 10895 / CBS 109.51 / FGSC 9923 / NRRL Y-1056) (Yeast), this protein is Golgi to ER traffic protein 2.